A 345-amino-acid polypeptide reads, in one-letter code: Flotillin-like protein FloA 1 (345 aa).

The chain crosses the membrane as a helical span at residues 26 to 46 (LLLLVGVFLALFFAAVLGFFF).

Belongs to the flotillin-like FloA family. Homooligomerizes.

It is found in the cell membrane. Its subcellular location is the membrane raft. In terms of biological role, found in functional membrane microdomains (FMM) that may be equivalent to eukaryotic membrane rafts. FMMs are highly dynamic and increase in number as cells age. Flotillins are thought to be important factors in membrane fluidity. This Rhodopirellula baltica (strain DSM 10527 / NCIMB 13988 / SH1) protein is Flotillin-like protein FloA 1.